Here is a 371-residue protein sequence, read N- to C-terminus: Bifunctional enzyme IspD/IspF (371 aa).

The segment at 1–214 (MNSCFIILAG…NSDIKFNNLI (214 aa)) is 2-C-methyl-D-erythritol 4-phosphate cytidylyltransferase. A 2-C-methyl-D-erythritol 2,4-cyclodiphosphate synthase region spans residues 215–371 (KFGIGFDVHR…EVIASVIKND (157 aa)). Positions 221 and 223 each coordinate a divalent metal cation. 4-CDP-2-C-methyl-D-erythritol 2-phosphate contacts are provided by residues 221 to 223 (DVH) and 247 to 248 (HS). H255 provides a ligand contact to a divalent metal cation. 4-CDP-2-C-methyl-D-erythritol 2-phosphate is bound by residues 269–271 (DIG), 274–278 (FSDKN), and K355.

In the N-terminal section; belongs to the IspD/TarI cytidylyltransferase family. IspD subfamily. It in the C-terminal section; belongs to the IspF family. A divalent metal cation serves as cofactor.

It carries out the reaction 2-C-methyl-D-erythritol 4-phosphate + CTP + H(+) = 4-CDP-2-C-methyl-D-erythritol + diphosphate. It catalyses the reaction 4-CDP-2-C-methyl-D-erythritol 2-phosphate = 2-C-methyl-D-erythritol 2,4-cyclic diphosphate + CMP. It functions in the pathway isoprenoid biosynthesis; isopentenyl diphosphate biosynthesis via DXP pathway; isopentenyl diphosphate from 1-deoxy-D-xylulose 5-phosphate: step 2/6. It participates in isoprenoid biosynthesis; isopentenyl diphosphate biosynthesis via DXP pathway; isopentenyl diphosphate from 1-deoxy-D-xylulose 5-phosphate: step 4/6. Functionally, bifunctional enzyme that catalyzes the formation of 4-diphosphocytidyl-2-C-methyl-D-erythritol from CTP and 2-C-methyl-D-erythritol 4-phosphate (MEP) (IspD), and catalyzes the conversion of 4-diphosphocytidyl-2-C-methyl-D-erythritol 2-phosphate (CDP-ME2P) to 2-C-methyl-D-erythritol 2,4-cyclodiphosphate (ME-CPP) with a corresponding release of cytidine 5-monophosphate (CMP) (IspF). The protein is Bifunctional enzyme IspD/IspF of Pelagibacter ubique (strain HTCC1062).